A 350-amino-acid polypeptide reads, in one-letter code: Membrane progestin receptor alpha (350 aa).

The Cytoplasmic portion of the chain corresponds to 1 to 80 (MATMVAQKLS…HNEAVNVWTH (80 aa)). The chain crosses the membrane as a helical span at residues 81-101 (LLAALVLLLRLAIFVGTVDFW). The Extracellular segment spans residues 102-105 (GDPH). The chain crosses the membrane as a helical span at residues 106–126 (ALPLFIIVLASFTYLSLSALA). Residues 127–139 (HLLQAKSEFWHYS) lie on the Cytoplasmic side of the membrane. Residues 140 to 160 (FFFLDYVGVAVYQFGSALAHF) form a helical membrane-spanning segment. Residues 161 to 165 (YYAIE) lie on the Extracellular side of the membrane. A helical transmembrane segment spans residues 166 to 186 (PAWHAQVQTIFLPMAAFLAWL). At 187-239 (SCTGSCYNKYIQKPGLLGRTCQEVPSALAYALDISPVAHRILASPEPATDDPA) the chain is on the cytoplasmic side. Residues 240–260 (LLYHKCQVVFFLLAAAFFSAF) traverse the membrane as a helical segment. Residues 261–278 (MPERWFPGSCHIFGQGHQ) lie on the Extracellular side of the membrane. A helical membrane pass occupies residues 279–299 (LFHVFLVLCTLAQLEAVALDY). The Cytoplasmic portion of the chain corresponds to 300-318 (EARRPIYEPLHTRWPHNFS). The helical transmembrane segment at 319–339 (GLFLLTVGSSILTAFLLSQLV) threads the bilayer. Topologically, residues 340-350 (RRKLDLDRKTQ) are extracellular.

This sequence belongs to the ADIPOR family.

It localises to the cell membrane. Plasma membrane progesterone (P4) receptor coupled to G proteins. Seems to act through a G(i) mediated pathway. May be involved in oocyte maturation. Involved in neurosteroid inhibition of apoptosis. Also binds dehydroepiandrosterone (DHEA), pregnanolone, pregnenolone and allopregnanolone. This is Membrane progestin receptor alpha (PAQR7) from Sus scrofa (Pig).